The primary structure comprises 429 residues: Glutamate-1-semialdehyde 2,1-aminomutase 2 (429 aa).

An N6-(pyridoxal phosphate)lysine modification is found at K268.

It belongs to the class-III pyridoxal-phosphate-dependent aminotransferase family. HemL subfamily. In terms of assembly, homodimer. Pyridoxal 5'-phosphate serves as cofactor.

It is found in the cytoplasm. It carries out the reaction (S)-4-amino-5-oxopentanoate = 5-aminolevulinate. It functions in the pathway porphyrin-containing compound metabolism; protoporphyrin-IX biosynthesis; 5-aminolevulinate from L-glutamyl-tRNA(Glu): step 2/2. This Geobacillus kaustophilus (strain HTA426) protein is Glutamate-1-semialdehyde 2,1-aminomutase 2.